A 172-amino-acid chain; its full sequence is Regulator of hemoglobinization and erythroid cell expansion protein (172 aa).

The chain crosses the membrane as a helical span at residues W9–I29. A disordered region spans residues V52 to Q106. Residues A64–D89 show a composition bias toward basic and acidic residues. The span at P91–P103 shows a compositional bias: low complexity. Y132 and Y141 each carry phosphotyrosine.

Interacts with EPOR; this interaction occurs in a erythropoietin (EPO)-dependent manner. Interacts with JAK2; this interaction occurs in a erythropoietin (EPO)-dependent manner. Interacts (via tyrosine-phosphorylated form) with GRB2. In terms of processing, phosphorylated. Phosphorylation on Tyr-132 and Tyr-141 occurs in a erythropoietin (EPO)-dependent manner. As to expression, expressed in the proerythroblasts (at protein level). Expressed strongly in the kidney. Expressed weakly in the pancreas, liver and lung. Expressed strongly in erythroid progenitor cells (EPCs). Expressed weakly in T-cells and neutrophils.

The protein resides in the cell membrane. Functionally, acts as a signaling transduction factor of the EPO-EPOR signaling pathway promoting erythroid cell differentiation. This Homo sapiens (Human) protein is Regulator of hemoglobinization and erythroid cell expansion protein.